The sequence spans 247 residues: CDP-diacylglycerol pyrophosphatase (247 aa).

The chain crosses the membrane as a helical span at residues 5–22 (IVLALVVSVAVAGGWLWM).

This sequence belongs to the Cdh family.

The protein resides in the cell inner membrane. The enzyme catalyses a CDP-1,2-diacyl-sn-glycerol + H2O = a 1,2-diacyl-sn-glycero-3-phosphate + CMP + 2 H(+). The protein operates within phospholipid metabolism; CDP-diacylglycerol degradation; phosphatidate from CDP-diacylglycerol: step 1/1. This Enterobacter sp. (strain 638) protein is CDP-diacylglycerol pyrophosphatase.